We begin with the raw amino-acid sequence, 314 residues long: Putative thiamine biosynthesis protein HI_0357 (314 aa).

It belongs to the NMT1/THI5 family.

Probably involved in thiamine biosynthesis. The polypeptide is Putative thiamine biosynthesis protein HI_0357 (Haemophilus influenzae (strain ATCC 51907 / DSM 11121 / KW20 / Rd)).